The primary structure comprises 800 residues: Phenylalanine--tRNA ligase beta subunit (800 aa).

Residues 39–154 enclose the tRNA-binding domain; that stretch reads TKDIKKLVVG…EAVKPGTDAL (116 aa). Residues 408–483 form the B5 domain; sequence SFVTPIEITA…RIYGYDEIPS (76 aa). Mg(2+)-binding residues include Asp-461, Asp-467, Glu-470, and Glu-471. The region spanning 708 to 800 is the FDX-ACB domain; it reads PRFPGVTRDI…ALKKHGAIIR (93 aa).

This sequence belongs to the phenylalanyl-tRNA synthetase beta subunit family. Type 1 subfamily. In terms of assembly, tetramer of two alpha and two beta subunits. It depends on Mg(2+) as a cofactor.

It is found in the cytoplasm. The enzyme catalyses tRNA(Phe) + L-phenylalanine + ATP = L-phenylalanyl-tRNA(Phe) + AMP + diphosphate + H(+). The sequence is that of Phenylalanine--tRNA ligase beta subunit from Staphylococcus epidermidis (strain ATCC 12228 / FDA PCI 1200).